The primary structure comprises 445 residues: Phosphoglucosamine mutase (445 aa).

Ser-102 serves as the catalytic Phosphoserine intermediate. The Mg(2+) site is built by Ser-102, Asp-241, Asp-243, and Asp-245. Ser-102 carries the phosphoserine modification.

It belongs to the phosphohexose mutase family. Mg(2+) serves as cofactor. In terms of processing, activated by phosphorylation.

It catalyses the reaction alpha-D-glucosamine 1-phosphate = D-glucosamine 6-phosphate. Its function is as follows. Catalyzes the conversion of glucosamine-6-phosphate to glucosamine-1-phosphate. The chain is Phosphoglucosamine mutase from Escherichia fergusonii (strain ATCC 35469 / DSM 13698 / CCUG 18766 / IAM 14443 / JCM 21226 / LMG 7866 / NBRC 102419 / NCTC 12128 / CDC 0568-73).